Here is a 237-residue protein sequence, read N- to C-terminus: Putative N-acetylmannosamine-6-phosphate 2-epimerase (237 aa).

This sequence belongs to the NanE family.

The catalysed reaction is an N-acyl-D-glucosamine 6-phosphate = an N-acyl-D-mannosamine 6-phosphate. Its pathway is amino-sugar metabolism; N-acetylneuraminate degradation; D-fructose 6-phosphate from N-acetylneuraminate: step 3/5. Converts N-acetylmannosamine-6-phosphate (ManNAc-6-P) to N-acetylglucosamine-6-phosphate (GlcNAc-6-P). The protein is Putative N-acetylmannosamine-6-phosphate 2-epimerase of Listeria monocytogenes serovar 1/2a (strain ATCC BAA-679 / EGD-e).